Reading from the N-terminus, the 357-residue chain is 39 kDa FK506-binding nuclear protein (357 aa).

Phosphoserine is present on Ser92. The segment at 113–251 (KNSKKSEDDE…ASKDPRTITG (139 aa)) is disordered. Residues 120–182 (DDEDENESGE…QDSDDSEAEE (63 aa)) show a composition bias toward acidic residues. Ser193 and Ser197 each carry phosphoserine. A compositionally biased stretch (basic and acidic residues) spans 222-237 (EKPEAKKEQPKAKEPA). Residues 269-357 (GKRVSVYYIG…VFEVELKAVH (89 aa)) enclose the PPIase FKBP-type domain.

The protein belongs to the FKBP-type PPIase family. As to expression, ubiquitously expressed, highest levels in ovary.

The protein resides in the nucleus. The enzyme catalyses [protein]-peptidylproline (omega=180) = [protein]-peptidylproline (omega=0). PPIases accelerate the folding of proteins. May function in a signal transduction cascade during early development. This chain is 39 kDa FK506-binding nuclear protein, found in Drosophila melanogaster (Fruit fly).